The following is a 220-amino-acid chain: Deoxyribose-phosphate aldolase (220 aa).

Asp-89 (proton donor/acceptor) is an active-site residue. Lys-150 (schiff-base intermediate with acetaldehyde) is an active-site residue. Lys-182 functions as the Proton donor/acceptor in the catalytic mechanism.

It belongs to the DeoC/FbaB aldolase family. DeoC type 1 subfamily.

Its subcellular location is the cytoplasm. It carries out the reaction 2-deoxy-D-ribose 5-phosphate = D-glyceraldehyde 3-phosphate + acetaldehyde. It functions in the pathway carbohydrate degradation; 2-deoxy-D-ribose 1-phosphate degradation; D-glyceraldehyde 3-phosphate and acetaldehyde from 2-deoxy-alpha-D-ribose 1-phosphate: step 2/2. Its function is as follows. Catalyzes a reversible aldol reaction between acetaldehyde and D-glyceraldehyde 3-phosphate to generate 2-deoxy-D-ribose 5-phosphate. In Mycoplasmoides pirum (Mycoplasma pirum), this protein is Deoxyribose-phosphate aldolase.